The following is a 789-amino-acid chain: Mediator of RNA polymerase II transcription subunit 15 (789 aa).

The interval 9-73 is interaction with SREBF1; the sequence is DWRSAAFRQK…IHFRDIHNKK (65 aa). 2 disordered regions span residues 88-140 and 257-326; these read LTGG…APHG and QQQA…PLVS. Positions 89–102 are enriched in low complexity; sequence TGGPTPGAAGIGMP. Over residues 108 to 118 the composition is skewed to gly residues; that stretch reads QSLGGMGGLGA. Composition is skewed to low complexity over residues 257 to 274, 282 to 291, and 302 to 326; these read QQQA…SMQQ, ALPQQLSQLH, and AQQS…PLVS. An Asymmetric dimethylarginine modification is found at R347. Residues 404-531 are disordered; sequence RFPPTSTMSA…PAGSSQAEEQ (128 aa). Residues 407 to 426 show a composition bias toward polar residues; that stretch reads PTSTMSAGPSSSISLGGQPT. A compositionally biased stretch (low complexity) spans 427-450; it reads TQVSQSSLTMLSSPSPGQQVQTPQ. Positions 451–463 are enriched in pro residues; it reads SMPPPPQPSPQPG. The span at 464 to 483 shows a compositional bias: low complexity; it reads SQPNSNVSSGPAPSPSSFLP. 2 stretches are compositionally biased toward polar residues: residues 494–504 and 512–530; these read VTARTPQNFSV and TPVN…QAEE. The Nuclear localization signal signature appears at 548 to 565; sequence RRMINKIDKNEDRKKDLS. Phosphothreonine is present on T604.

This sequence belongs to the Mediator complex subunit 15 family. Component of the Mediator complex, which is composed of MED1, MED4, MED6, MED7, MED8, MED9, MED10, MED11, MED12, MED13, MED13L, MED14, MED15, MED16, MED17, MED18, MED19, MED20, MED21, MED22, MED23, MED24, MED25, MED26, MED27, MED29, MED30, MED31, CCNC, CDK8 and CDC2L6/CDK11. The MED12, MED13, CCNC and CDK8 subunits form a distinct module termed the CDK8 module. Mediator containing the CDK8 module is less active than Mediator lacking this module in supporting transcriptional activation. Individual preparations of the Mediator complex lacking one or more distinct subunits have been variously termed ARC, CRSP, DRIP, PC2, SMCC and TRAP. Interacts with SMAD2, SMAD3, SREBF1 and SREBF2. Interacts with WWTR1. Interacts with TRIM11. In terms of processing, ubiquitinated by TRIM11, leading to proteasomal degradation.

Its subcellular location is the cytoplasm. The protein localises to the nucleus. In terms of biological role, component of the Mediator complex, a coactivator involved in the regulated transcription of nearly all RNA polymerase II-dependent genes. Mediator functions as a bridge to convey information from gene-specific regulatory proteins to the basal RNA polymerase II transcription machinery. Mediator is recruited to promoters by direct interactions with regulatory proteins and serves as a scaffold for the assembly of a functional preinitiation complex with RNA polymerase II and the general transcription factors. Required for cholesterol-dependent gene regulation. Positively regulates the Nodal signaling pathway. In Mus musculus (Mouse), this protein is Mediator of RNA polymerase II transcription subunit 15 (Med15).